Reading from the N-terminus, the 108-residue chain is FK506-binding protein 1A (108 aa).

Residues 1-20 (MGVEVQRISPGDGKNFPKPG) form a disordered region. The PPIase FKBP-type domain maps to 20-108 (GDTVSIHYTG…TFEVELLKIN (89 aa)).

Belongs to the FKBP-type PPIase family. FKBP1 subfamily.

The protein resides in the cytoplasm. It catalyses the reaction [protein]-peptidylproline (omega=180) = [protein]-peptidylproline (omega=0). Its activity is regulated as follows. Inhibited by both FK506 and rapamycin. PPIases accelerate the folding of proteins. It catalyzes the cis-trans isomerization of proline imidic peptide bonds in oligopeptides. This is FK506-binding protein 1A (fprA) from Emericella nidulans (strain FGSC A4 / ATCC 38163 / CBS 112.46 / NRRL 194 / M139) (Aspergillus nidulans).